The following is a 690-amino-acid chain: MKGKGEQVFRLESSYEPEGDQPQAIEALRQGVMDGQTNQVLLGVTGSGKTFTMANVIAEVNKPVLLISHNKTLAAQLYGELKQFFPHNAVEYFISYYDFYQPEAYIPTMDKYIAKDLKINDEIERLRLKATSSLLSGRKDVIVVSSVSCIYGLGAPEDWKAQIIELRVNMEKERDSFLQELISLHFVRDDSDLAPGKFRVRGDVIDLVPMHEESALRVEFFGDEIERLQLFDHTTGEIFEDEEYAFIYPARQFVAGREKLQQAMLGIEDELAHRLNVFRSGEKFVEARRIEERTRYDLEMIKELGYCSGIENYSRHLSGRKAGERPYCLLDYFPEDYLVIVDESHVTFPQIRGMYAGDRSRKTILVEYGFRLPSALDNRPLRFEEFETMVPQLISVSATPGDYELRRSGGSVVEQLVRPTGLLDPEIVVRPVNGQIDDLLEEIRKHTGKGFKSLVMTLTKRMSEDLHDYLRKAGLRTRYLHSEIKSLERMQILRELRTGEIDILVGVNLLREGLDLPEVSLVAILDADKEGFLRDSKSLMQIAGRAARNVEGMVVFYADRITASMRYVIDETERRRSVQRKFNEDHGVIPASIVKSVDQVLDTTGVADAEDRFRRRRFGLEQRSRRGIEDLVGSLKREDLYAMAEELRLEMQEAAESMEFEKAAYLRDEVTKLEDAAEEKRESEGGMDSG.

One can recognise a Helicase ATP-binding domain in the interval 30–188; sequence QGVMDGQTNQ…QELISLHFVR (159 aa). 43 to 50 contacts ATP; that stretch reads GVTGSGKT. A Beta-hairpin motif is present at residues 96–119; the sequence is YYDFYQPEAYIPTMDKYIAKDLKI. In terms of domain architecture, Helicase C-terminal spans 435–601; sequence QIDDLLEEIR…SIVKSVDQVL (167 aa). The region spanning 641–676 is the UVR domain; the sequence is YAMAEELRLEMQEAAESMEFEKAAYLRDEVTKLEDA.

It belongs to the UvrB family. In terms of assembly, forms a heterotetramer with UvrA during the search for lesions. Interacts with UvrC in an incision complex.

It is found in the cytoplasm. Its function is as follows. The UvrABC repair system catalyzes the recognition and processing of DNA lesions. A damage recognition complex composed of 2 UvrA and 2 UvrB subunits scans DNA for abnormalities. Upon binding of the UvrA(2)B(2) complex to a putative damaged site, the DNA wraps around one UvrB monomer. DNA wrap is dependent on ATP binding by UvrB and probably causes local melting of the DNA helix, facilitating insertion of UvrB beta-hairpin between the DNA strands. Then UvrB probes one DNA strand for the presence of a lesion. If a lesion is found the UvrA subunits dissociate and the UvrB-DNA preincision complex is formed. This complex is subsequently bound by UvrC and the second UvrB is released. If no lesion is found, the DNA wraps around the other UvrB subunit that will check the other stand for damage. This Chlorobium phaeobacteroides (strain BS1) protein is UvrABC system protein B.